Consider the following 388-residue polypeptide: Leucine aminopeptidase 1 (388 aa).

The signal sequence occupies residues 1-19 (MRVLAAIALGATGLRGALA). Positions 20 to 88 (AVVPQEVLGT…YPTLNSASYV (69 aa)) are excised as a propeptide. N-linked (GlcNAc...) asparagine glycans are attached at residues N106 and N180. Zn(2+) is bound by residues H188 and D207. N232 is a glycosylation site (N-linked (GlcNAc...) asparagine). Zn(2+)-binding residues include E246 and D273. C322 and C326 are oxidised to a cystine. H355 is a Zn(2+) binding site.

It belongs to the peptidase M28 family. M28E subfamily. In terms of assembly, monomer. Zn(2+) is required as a cofactor.

It is found in the secreted. Extracellular aminopeptidase that allows assimilation of proteinaceous substrates. In Aspergillus clavatus (strain ATCC 1007 / CBS 513.65 / DSM 816 / NCTC 3887 / NRRL 1 / QM 1276 / 107), this protein is Leucine aminopeptidase 1 (lap1).